The chain runs to 434 residues: Beta-enolase (434 aa).

Alanine 2 carries the N-acetylalanine modification. Threonine 72 carries the post-translational modification Phosphothreonine. Phosphoserine is present on residues serine 83 and serine 157. Histidine 158 and glutamate 167 together coordinate substrate. Serine 176 carries the phosphoserine modification. At threonine 205 the chain carries Phosphothreonine. Residue glutamate 210 is the Proton donor of the active site. Threonine 229 bears the Phosphothreonine mark. Tyrosine 236 is modified (phosphotyrosine). Aspartate 245 is a Mg(2+) binding site. Serine 263 is modified (phosphoserine). Positions 293 and 318 each coordinate substrate. Mg(2+)-binding residues include glutamate 293 and aspartate 318. The active-site Proton acceptor is lysine 343. Substrate contacts are provided by residues 370-373 (SHRS) and lysine 394.

This sequence belongs to the enolase family. Mammalian enolase is composed of 3 isozyme subunits, alpha, beta and gamma, which can form homodimers or heterodimers which are cell-type and development-specific. In vitro, interacts with several glycolytic enzymes including PKM, PGM, CKM and ALDO. Also binds PLG and troponin, in vitro. Interacts with PNKD. Mg(2+) serves as cofactor. Brain (at protein level). The alpha/alpha homodimer is expressed in embryo and in most adult tissues. The alpha/beta heterodimer and the beta/beta homodimer are found in striated muscle, and the alpha/gamma heterodimer and the gamma/gamma homodimer in neurons. In striated muscle, the fiber-type order of ENO3 expression is IIB &gt; IIX &gt; IIA &gt; I.

Its subcellular location is the cytoplasm. It catalyses the reaction (2R)-2-phosphoglycerate = phosphoenolpyruvate + H2O. It functions in the pathway carbohydrate degradation; glycolysis; pyruvate from D-glyceraldehyde 3-phosphate: step 4/5. Glycolytic enzyme that catalyzes the conversion of 2-phosphoglycerate to phosphoenolpyruvate. Appears to have a function in striated muscle development and regeneration. This is Beta-enolase (Eno3) from Mus musculus (Mouse).